The following is a 272-amino-acid chain: Type II secretion system protein C (272 aa).

Residues 1 to 16 (MNISKLPPLSPSVIRR) are Cytoplasmic-facing. The chain crosses the membrane as a helical span at residues 17-35 (ILFYLLMLLFCQQLAMIFW). Topologically, residues 36 to 272 (RIGLPDNAPV…DIYMEFGGDE (237 aa)) are periplasmic.

Belongs to the GSP C family.

It localises to the cell inner membrane. Functionally, involved in a type II secretion system (T2SS, formerly general secretion pathway, GSP) for the export of proteins. Required for the translocation of the multiple pectic enzymes. This Dickeya dadantii (strain 3937) (Erwinia chrysanthemi (strain 3937)) protein is Type II secretion system protein C (outC).